Consider the following 255-residue polypeptide: Imidazole glycerol phosphate synthase subunit HisF (255 aa).

Active-site residues include Asp11 and Asp130.

Belongs to the HisA/HisF family. In terms of assembly, heterodimer of HisH and HisF.

It localises to the cytoplasm. It catalyses the reaction 5-[(5-phospho-1-deoxy-D-ribulos-1-ylimino)methylamino]-1-(5-phospho-beta-D-ribosyl)imidazole-4-carboxamide + L-glutamine = D-erythro-1-(imidazol-4-yl)glycerol 3-phosphate + 5-amino-1-(5-phospho-beta-D-ribosyl)imidazole-4-carboxamide + L-glutamate + H(+). The protein operates within amino-acid biosynthesis; L-histidine biosynthesis; L-histidine from 5-phospho-alpha-D-ribose 1-diphosphate: step 5/9. Functionally, IGPS catalyzes the conversion of PRFAR and glutamine to IGP, AICAR and glutamate. The HisF subunit catalyzes the cyclization activity that produces IGP and AICAR from PRFAR using the ammonia provided by the HisH subunit. This chain is Imidazole glycerol phosphate synthase subunit HisF, found in Akkermansia muciniphila (strain ATCC BAA-835 / DSM 22959 / JCM 33894 / BCRC 81048 / CCUG 64013 / CIP 107961 / Muc).